The chain runs to 144 residues: MIALIQRVSQAKVNVKGETIGKIGKGLLVLLGVEKEDNREKADKLAEKVLNYRIFSDENDKMNLNVQQAQGELLIVSQFTLAADTQKGLRPSFSKGAPPALANELYEYFIQKCAEKLPVSTGQFAADMQVSLTNDGPVTFWLNV.

The short motif at 136 to 137 (GP) is the Gly-cisPro motif, important for rejection of L-amino acids element.

Belongs to the DTD family. Homodimer.

Its subcellular location is the cytoplasm. The catalysed reaction is glycyl-tRNA(Ala) + H2O = tRNA(Ala) + glycine + H(+). It carries out the reaction a D-aminoacyl-tRNA + H2O = a tRNA + a D-alpha-amino acid + H(+). In terms of biological role, an aminoacyl-tRNA editing enzyme that deacylates mischarged D-aminoacyl-tRNAs. Also deacylates mischarged glycyl-tRNA(Ala), protecting cells against glycine mischarging by AlaRS. Acts via tRNA-based rather than protein-based catalysis; rejects L-amino acids rather than detecting D-amino acids in the active site. By recycling D-aminoacyl-tRNA to D-amino acids and free tRNA molecules, this enzyme counteracts the toxicity associated with the formation of D-aminoacyl-tRNA entities in vivo and helps enforce protein L-homochirality. The sequence is that of D-aminoacyl-tRNA deacylase from Haemophilus influenzae (strain PittGG).